An 861-amino-acid polypeptide reads, in one-letter code: DNA mismatch repair protein MutS (861 aa).

Position 616–623 (616–623 (GPNMGGKS)) interacts with ATP.

The protein belongs to the DNA mismatch repair MutS family.

In terms of biological role, this protein is involved in the repair of mismatches in DNA. It is possible that it carries out the mismatch recognition step. This protein has a weak ATPase activity. The protein is DNA mismatch repair protein MutS of Haemophilus influenzae (strain PittEE).